A 209-amino-acid chain; its full sequence is Uracil phosphoribosyltransferase (209 aa).

Residues Arg-77, Arg-102, and 129–137 (DPMLATGSS) each bind 5-phospho-alpha-D-ribose 1-diphosphate. Uracil contacts are provided by residues Ile-192 and 197 to 199 (GDA). Asp-198 lines the 5-phospho-alpha-D-ribose 1-diphosphate pocket.

This sequence belongs to the UPRTase family. The cofactor is Mg(2+).

The catalysed reaction is UMP + diphosphate = 5-phospho-alpha-D-ribose 1-diphosphate + uracil. Its pathway is pyrimidine metabolism; UMP biosynthesis via salvage pathway; UMP from uracil: step 1/1. Its activity is regulated as follows. Allosterically activated by GTP. In terms of biological role, catalyzes the conversion of uracil and 5-phospho-alpha-D-ribose 1-diphosphate (PRPP) to UMP and diphosphate. The polypeptide is Uracil phosphoribosyltransferase (Metamycoplasma hominis (Mycoplasma hominis)).